A 211-amino-acid chain; its full sequence is Probable cytokinin riboside 5'-monophosphate phosphoribohydrolase LOGL3 (211 aa).

Substrate contacts are provided by residues Glu84, Arg102–Lys103, Gly119–Glu125, and Thr131.

It belongs to the LOG family. In terms of tissue distribution, expressed in roots, leaves, stems, tiller buds, shoot apex, immature inflorescences and flowers.

It carries out the reaction N(6)-(dimethylallyl)adenosine 5'-phosphate + H2O = N(6)-dimethylallyladenine + D-ribose 5-phosphate. The catalysed reaction is 9-ribosyl-trans-zeatin 5'-phosphate + H2O = trans-zeatin + D-ribose 5-phosphate. Cytokinin-activating enzyme working in the direct activation pathway. Phosphoribohydrolase that converts inactive cytokinin nucleotides to the biologically active free-base forms. The sequence is that of Probable cytokinin riboside 5'-monophosphate phosphoribohydrolase LOGL3 (LOGL3) from Oryza sativa subsp. japonica (Rice).